The primary structure comprises 533 residues: Beta-apo-4'-carotenal oxygenase (533 aa).

Active-site residues include E226 and C260.

This sequence belongs to the aldehyde dehydrogenase family.

The catalysed reaction is 4'-apo-beta-carotenal + NAD(+) + H2O = neurosporaxanthin + NADH + 2 H(+). Functionally, beta-apo-4'-carotenal oxygenase involved in the last step of synthesis of neurosporaxanthin, a carboxylic apocarotenoid acting as an essential protective pigment and leading to orange pigmentation. Converts the aldehyde beta-apo-4'-carotenal into neurosporaxanthin. Neurosporaxanthin is synthesized from geranyl-geranyl pyrophosphate (GGPP) through several enzymatic activities. Phytoene synthase activity performed by the bifunctional enzyme al-2 first produces phytoene from geranyl-geranyl pyrophosphate (GGPP). The phytoene dehydrogenase al-1 then introduces 5 desaturations to lead to 3,4-didehydrolycopene via the intermediates phytofluene, zeta-carotene, neurosporene and lycopene. Al-2 cyclase activity then converts 3,4-didehydrolycopene into torulene. Al-2 can also convet lycopene into gamma-carotene which in turn is converted to beta-carotene by an additional al-2 cyclization reaction. Torulene is the substrate of the dioxidase cao-2 that breaks the molecule, removing five carbon atoms to yield beta-apo-4'-carotenal, whereas the aldehyde dehydrogenase ylo-1 mediates the last step by converting beta-apo-4'-carotenal into neurosporaxanthin. This Neurospora crassa (strain ATCC 24698 / 74-OR23-1A / CBS 708.71 / DSM 1257 / FGSC 987) protein is Beta-apo-4'-carotenal oxygenase.